The following is a 219-amino-acid chain: Thiamine-phosphate synthase (219 aa).

Residues 48–52 (QLREK) and N80 contribute to the 4-amino-2-methyl-5-(diphosphooxymethyl)pyrimidine site. Residues D81 and D100 each contribute to the Mg(2+) site. S119 is a 4-amino-2-methyl-5-(diphosphooxymethyl)pyrimidine binding site. 145 to 147 (TPT) contributes to the 2-[(2R,5Z)-2-carboxy-4-methylthiazol-5(2H)-ylidene]ethyl phosphate binding site. K148 lines the 4-amino-2-methyl-5-(diphosphooxymethyl)pyrimidine pocket. 2-[(2R,5Z)-2-carboxy-4-methylthiazol-5(2H)-ylidene]ethyl phosphate-binding positions include G176 and 196–197 (VS).

The protein belongs to the thiamine-phosphate synthase family. Mg(2+) is required as a cofactor.

It catalyses the reaction 2-[(2R,5Z)-2-carboxy-4-methylthiazol-5(2H)-ylidene]ethyl phosphate + 4-amino-2-methyl-5-(diphosphooxymethyl)pyrimidine + 2 H(+) = thiamine phosphate + CO2 + diphosphate. It carries out the reaction 2-(2-carboxy-4-methylthiazol-5-yl)ethyl phosphate + 4-amino-2-methyl-5-(diphosphooxymethyl)pyrimidine + 2 H(+) = thiamine phosphate + CO2 + diphosphate. The catalysed reaction is 4-methyl-5-(2-phosphooxyethyl)-thiazole + 4-amino-2-methyl-5-(diphosphooxymethyl)pyrimidine + H(+) = thiamine phosphate + diphosphate. The protein operates within cofactor biosynthesis; thiamine diphosphate biosynthesis; thiamine phosphate from 4-amino-2-methyl-5-diphosphomethylpyrimidine and 4-methyl-5-(2-phosphoethyl)-thiazole: step 1/1. Its function is as follows. Condenses 4-methyl-5-(beta-hydroxyethyl)thiazole monophosphate (THZ-P) and 2-methyl-4-amino-5-hydroxymethyl pyrimidine pyrophosphate (HMP-PP) to form thiamine monophosphate (TMP). This is Thiamine-phosphate synthase from Albidiferax ferrireducens (strain ATCC BAA-621 / DSM 15236 / T118) (Rhodoferax ferrireducens).